The sequence spans 353 residues: 4-hydroxy-3-methylbut-2-en-1-yl diphosphate synthase (flavodoxin) (353 aa).

Residues Cys-268, Cys-271, Cys-303, and Glu-310 each contribute to the [4Fe-4S] cluster site.

It belongs to the IspG family. The cofactor is [4Fe-4S] cluster.

The catalysed reaction is (2E)-4-hydroxy-3-methylbut-2-enyl diphosphate + oxidized [flavodoxin] + H2O + 2 H(+) = 2-C-methyl-D-erythritol 2,4-cyclic diphosphate + reduced [flavodoxin]. It functions in the pathway isoprenoid biosynthesis; isopentenyl diphosphate biosynthesis via DXP pathway; isopentenyl diphosphate from 1-deoxy-D-xylulose 5-phosphate: step 5/6. In terms of biological role, converts 2C-methyl-D-erythritol 2,4-cyclodiphosphate (ME-2,4cPP) into 1-hydroxy-2-methyl-2-(E)-butenyl 4-diphosphate. This chain is 4-hydroxy-3-methylbut-2-en-1-yl diphosphate synthase (flavodoxin), found in Ruminiclostridium cellulolyticum (strain ATCC 35319 / DSM 5812 / JCM 6584 / H10) (Clostridium cellulolyticum).